A 175-amino-acid polypeptide reads, in one-letter code: MLSSLSSSITNARQSIAQVLNFALVLSTAFMMWKGLSVVSASSSPIVVVLSGSMEPAFQRGDLLFLWNRDTRTEIGEVLVYNVRGKSIPIVHRVVRTFPEVEGRASAKKGDNNLADDTELYAQDQDYLDRAEDIVGSVRGYIPMVGYVTIMLSEHPWLKTVMLGLMGLMVMIQRE.

Topologically, residues 1 to 14 (MLSSLSSSITNARQ) are cytoplasmic. A helical; Signal-anchor for type II membrane protein membrane pass occupies residues 15 to 31 (SIAQVLNFALVLSTAFM). The Lumenal portion of the chain corresponds to 32 to 175 (MWKGLSVVSA…MGLMVMIQRE (144 aa)). Residues S53, H92, and D117 each act as charge relay system in the active site. Residues 161 to 172 (VMLGLMGLMVMI) are C-terminal short (CTS) helix.

The protein belongs to the peptidase S26B family. As to quaternary structure, component of the signal peptidase complex (SPC) composed of a catalytic subunit SEC11 and three accessory subunits SPC1, SPC2 and SPC3. The complex induces a local thinning of the ER membrane which is used to measure the length of the signal peptide (SP) h-region of protein substrates. This ensures the selectivity of the complex towards h-regions shorter than 18-20 amino acids. SPC associates with the translocon complex.

Its subcellular location is the endoplasmic reticulum membrane. It carries out the reaction Cleavage of hydrophobic, N-terminal signal or leader sequences from secreted and periplasmic proteins.. Catalytic component of the signal peptidase complex (SPC) which catalyzes the cleavage of N-terminal signal sequences from nascent proteins as they are translocated into the lumen of the endoplasmic reticulum. Specifically cleaves N-terminal signal peptides that contain a hydrophobic alpha-helix (h-region) shorter than 18-20 amino acids. The protein is Signal peptidase complex catalytic subunit sec11 (sec11) of Penicillium rubens (strain ATCC 28089 / DSM 1075 / NRRL 1951 / Wisconsin 54-1255) (Penicillium chrysogenum).